The following is a 662-amino-acid chain: Acetyl-coenzyme A synthetase (662 aa).

CoA contacts are provided by residues 197–200 (RKGK) and Thr-317. Residues 393–395 (GEP), 417–422 (DTWWQT), Asp-510, and Arg-525 contribute to the ATP site. Ser-533 contacts CoA. Arg-536 provides a ligand contact to ATP. Mg(2+)-binding residues include His-549 and Val-552. Lys-623 carries the N6-acetyllysine modification.

This sequence belongs to the ATP-dependent AMP-binding enzyme family. It depends on Mg(2+) as a cofactor. Post-translationally, acetylated. Deacetylation by the SIR2-homolog deacetylase activates the enzyme.

It carries out the reaction acetate + ATP + CoA = acetyl-CoA + AMP + diphosphate. Catalyzes the conversion of acetate into acetyl-CoA (AcCoA), an essential intermediate at the junction of anabolic and catabolic pathways. AcsA undergoes a two-step reaction. In the first half reaction, AcsA combines acetate with ATP to form acetyl-adenylate (AcAMP) intermediate. In the second half reaction, it can then transfer the acetyl group from AcAMP to the sulfhydryl group of CoA, forming the product AcCoA. This chain is Acetyl-coenzyme A synthetase, found in Helicobacter pylori (strain HPAG1).